The sequence spans 100 residues: uncharacterized protein (100 aa).

A disordered region spans residues 40 to 100; the sequence is GDQMARKATS…DPTKNKSGRG (61 aa).

This is an uncharacterized protein from Mycobacterium tuberculosis (strain ATCC 25618 / H37Rv).